Here is a 479-residue protein sequence, read N- to C-terminus: Adenosylhomocysteinase (479 aa).

3 residues coordinate substrate: threonine 66, aspartate 142, and glutamate 203. 204 to 206 (TTT) provides a ligand contact to NAD(+). 2 residues coordinate substrate: lysine 233 and aspartate 237. Residues asparagine 238, 267–272 (GYGDVG), glutamate 290, asparagine 325, 346–348 (IGH), and asparagine 394 contribute to the NAD(+) site.

This sequence belongs to the adenosylhomocysteinase family. NAD(+) is required as a cofactor.

The protein localises to the cytoplasm. The enzyme catalyses S-adenosyl-L-homocysteine + H2O = L-homocysteine + adenosine. The protein operates within amino-acid biosynthesis; L-homocysteine biosynthesis; L-homocysteine from S-adenosyl-L-homocysteine: step 1/1. Functionally, may play a key role in the regulation of the intracellular concentration of adenosylhomocysteine. The chain is Adenosylhomocysteinase from Nitratidesulfovibrio vulgaris (strain DSM 19637 / Miyazaki F) (Desulfovibrio vulgaris).